The primary structure comprises 204 residues: N-(5'-phosphoribosyl)anthranilate isomerase (204 aa).

This sequence belongs to the TrpF family.

The enzyme catalyses N-(5-phospho-beta-D-ribosyl)anthranilate = 1-(2-carboxyphenylamino)-1-deoxy-D-ribulose 5-phosphate. It functions in the pathway amino-acid biosynthesis; L-tryptophan biosynthesis; L-tryptophan from chorismate: step 3/5. The sequence is that of N-(5'-phosphoribosyl)anthranilate isomerase from Geobacter sp. (strain M21).